A 370-amino-acid polypeptide reads, in one-letter code: Cytochrome b (370 aa).

The next 4 membrane-spanning stretches (helical) occupy residues 25–45, 69–90, 105–125, and 170–190; these read FGSMLLACLTLQLLTGFFLAV, WMMQNLHAIGASMFFICIYIHI, WLSGTTLLIMLMATAFFGYVL, and FFALHFILPFGIISLSSLHIL. Residues His75 and His89 each coordinate heme b. His174 and His188 together coordinate heme b. His193 contacts a ubiquinone. Transmembrane regions (helical) follow at residues 218-238, 280-300, 312-332, and 339-358; these read YKDMLMLTIMTIMLLTIVSFF, LGGALALTMSIMMLLTLPFTH, FMQLTFWTFTATFLVISWTAT, and FTTISQVAALMYFLFFISNP.

Belongs to the cytochrome b family. As to quaternary structure, the cytochrome bc1 complex contains 3 respiratory subunits (MT-CYB, CYC1 and UQCRFS1), 2 core proteins (UQCRC1 and UQCRC2) and probably 6 low-molecular weight proteins. The cofactor is heme b.

The protein localises to the mitochondrion inner membrane. Functionally, component of the ubiquinol-cytochrome c reductase complex (complex III or cytochrome b-c1 complex) that is part of the mitochondrial respiratory chain. The b-c1 complex mediates electron transfer from ubiquinol to cytochrome c. Contributes to the generation of a proton gradient across the mitochondrial membrane that is then used for ATP synthesis. In Chilabothrus strigilatus fosteri (Bimini Island boa constrictor), this protein is Cytochrome b (MT-CYB).